The chain runs to 411 residues: LL-diaminopimelate aminotransferase (411 aa).

Tyr-15 and Gly-42 together coordinate substrate. Residues Tyr-72, 105–106 (SK), Tyr-129, Asn-186, Tyr-217, and 245–247 (SFS) contribute to the pyridoxal 5'-phosphate site. Residues Lys-106, Tyr-129, and Asn-186 each contribute to the substrate site. N6-(pyridoxal phosphate)lysine is present on Lys-248. Arg-256 and Asn-287 together coordinate pyridoxal 5'-phosphate. Residues Asn-287 and Arg-382 each contribute to the substrate site.

The protein belongs to the class-I pyridoxal-phosphate-dependent aminotransferase family. LL-diaminopimelate aminotransferase subfamily. As to quaternary structure, homodimer. Pyridoxal 5'-phosphate serves as cofactor.

The catalysed reaction is (2S,6S)-2,6-diaminopimelate + 2-oxoglutarate = (S)-2,3,4,5-tetrahydrodipicolinate + L-glutamate + H2O + H(+). It functions in the pathway amino-acid biosynthesis; L-lysine biosynthesis via DAP pathway; LL-2,6-diaminopimelate from (S)-tetrahydrodipicolinate (aminotransferase route): step 1/1. Functionally, involved in the synthesis of meso-diaminopimelate (m-DAP or DL-DAP), required for both lysine and peptidoglycan biosynthesis. Catalyzes the direct conversion of tetrahydrodipicolinate to LL-diaminopimelate. Is also able to use meso-diaminopimelate, lysine or ornithine as substrates. This Protochlamydia amoebophila (strain UWE25) protein is LL-diaminopimelate aminotransferase.